Consider the following 180-residue polypeptide: Endoribonuclease YbeY (180 aa).

Zn(2+) contacts are provided by histidine 118, histidine 122, and histidine 128.

Belongs to the endoribonuclease YbeY family. The cofactor is Zn(2+).

It is found in the cytoplasm. Single strand-specific metallo-endoribonuclease involved in late-stage 70S ribosome quality control and in maturation of the 3' terminus of the 16S rRNA. This is Endoribonuclease YbeY from Rhodococcus opacus (strain B4).